The primary structure comprises 1693 residues: Latrophilin Cirl (1693 aa).

At Met-1–Arg-753 the chain is on the extracellular side. The region spanning Ala-25–Ile-114 is the SUEL-type lectin domain. Asn-142 carries N-linked (GlcNAc...) asparagine glycosylation. 2 stretches are compositionally biased toward polar residues: residues Thr-185–Ala-198 and Asn-256–Ile-265. Positions Thr-185–Ala-299 are disordered. Asn-256 is a glycosylation site (N-linked (GlcNAc...) asparagine). Residues Asp-275–Ala-299 are compositionally biased toward low complexity. 6 N-linked (GlcNAc...) asparagine glycosylation sites follow: Asn-301, Asn-340, Asn-397, Asn-641, Asn-689, and Asn-716. The segment at Tyr-375–Ser-399 is disordered. The 177-residue stretch at Lys-564 to His-740 folds into the GAIN-B domain. 2 disulfide bridges follow: Cys-695–Cys-722 and Cys-710–Cys-724. Residues Cys-695 to His-740 are GPS. A helical transmembrane segment spans residues Ile-754–Leu-774. The Cytoplasmic portion of the chain corresponds to Lys-775–Thr-787. The helical transmembrane segment at Ser-788 to Ile-808 threads the bilayer. The Extracellular portion of the chain corresponds to Glu-809–Ser-814. The helical transmembrane segment at Ile-815–Phe-835 threads the bilayer. Residues Cys-836–Val-861 are Cytoplasmic-facing. Residues Asn-862–Ile-882 form a helical membrane-spanning segment. The Extracellular portion of the chain corresponds to Asp-883 to Phe-906. Residues Val-907–Ile-927 traverse the membrane as a helical segment. Residues Met-928–Ser-954 lie on the Cytoplasmic side of the membrane. A helical transmembrane segment spans residues Phe-955–Ala-975. Topologically, residues Lys-976–Tyr-985 are extracellular. A helical membrane pass occupies residues Gly-986–Ile-1006. Over Gln-1007–Lys-1693 the chain is Cytoplasmic. The residue at position 1142 (Ser-1142) is a Phosphoserine. Disordered regions lie at residues His-1156–Pro-1194, Lys-1220–Arg-1247, Gln-1294–His-1319, Gly-1433–Arg-1521, and Leu-1601–His-1673. Phosphoserine occurs at positions 1239 and 1246. The span at Gln-1294–Leu-1309 shows a compositional bias: low complexity. 2 positions are modified to phosphoserine: Ser-1310 and Ser-1311. Residues Gly-1439–Arg-1464 show a composition bias toward low complexity. Composition is skewed to acidic residues over residues Asp-1472–Thr-1486 and Cys-1496–Leu-1507. Over residues Glu-1508–Arg-1521 the composition is skewed to basic and acidic residues. Residues Leu-1630–His-1655 are compositionally biased toward low complexity. Over residues Gln-1656–Arg-1672 the composition is skewed to basic residues.

This sequence belongs to the G-protein coupled receptor 2 family. LN-TM7 subfamily. In terms of assembly, forms a heterodimer, consisting of a large extracellular region non-covalently linked to a seven-transmembrane moiety. Proteolytically cleaved into 2 subunits, an extracellular subunit and a seven-transmembrane subunit.

It localises to the cell membrane. This is Latrophilin Cirl from Drosophila sechellia (Fruit fly).